Reading from the N-terminus, the 146-residue chain is Protein U1 (146 aa).

This sequence belongs to the nanovirus U1 protein family.

This chain is Protein U1 (DNA-U1), found in Subterranean clover stunt virus (strain F) (SCSV).